Reading from the N-terminus, the 1288-residue chain is SH3 domain and tetratricopeptide repeat-containing protein 2 (1288 aa).

2 SH3 domains span residues 176-240 and 268-331; these read EGHF…PLPL and IGRG…PDSY. Positions 386–395 are enriched in polar residues; that stretch reads NPPNDLSASQ. 2 disordered regions span residues 386–405 and 410–444; these read NPPN…VRPG and EHQA…LPEP. 8 TPR repeats span residues 528–561, 757–790, 836–869, 1001–1037, 1084–1118, 1119–1152, 1166–1199, and 1210–1244; these read ARLC…LNGA, RALC…GQLL, GVIY…AQEV, GRLL…FIDL, LKLY…LARR, LKAV…ATLA, LVAF…CPPW, and AKVY…AVLL.

As to expression, strongly expressed in brain and spinal cord. Expressed at equal level in spinal cord and sciatic nerve. Weakly expressed in striated muscle.

This is SH3 domain and tetratricopeptide repeat-containing protein 2 (SH3TC2) from Homo sapiens (Human).